Here is a 955-residue protein sequence, read N- to C-terminus: Leucine--tRNA ligase (955 aa).

A 'HIGH' region motif is present at residues Pro51 to His61. Positions Lys647–Ser651 match the 'KMSKS' region motif. Residue Lys650 coordinates ATP.

The protein belongs to the class-I aminoacyl-tRNA synthetase family.

Its subcellular location is the cytoplasm. The enzyme catalyses tRNA(Leu) + L-leucine + ATP = L-leucyl-tRNA(Leu) + AMP + diphosphate. The polypeptide is Leucine--tRNA ligase (Methanococcus maripaludis (strain C5 / ATCC BAA-1333)).